The sequence spans 331 residues: Vitamin B12 import system permease protein BtuC (331 aa).

The next 9 helical transmembrane spans lie at 20–42 (IMSV…FLSP), 62–84 (LVAA…VLLG), 91–113 (GVLG…LPVL), 118–140 (IFML…IARA), 147–169 (RLLL…AFYF), 189–208 (ASWY…VWLC), 240–262 (LAIS…VGLV), 277–299 (YLLP…GARL), and 306–325 (LPLG…WMLV).

Belongs to the binding-protein-dependent transport system permease family. FecCD subfamily. In terms of assembly, the complex is composed of two ATP-binding proteins (BtuD), two transmembrane proteins (BtuC) and a solute-binding protein (BtuF).

The protein resides in the cell inner membrane. Functionally, part of the ABC transporter complex BtuCDF involved in vitamin B12 import. Involved in the translocation of the substrate across the membrane. The protein is Vitamin B12 import system permease protein BtuC of Vibrio parahaemolyticus serotype O3:K6 (strain RIMD 2210633).